The primary structure comprises 394 residues: ATP phosphoribosyltransferase regulatory subunit (394 aa).

Belongs to the class-II aminoacyl-tRNA synthetase family. HisZ subfamily. Heteromultimer composed of HisG and HisZ subunits.

It localises to the cytoplasm. It participates in amino-acid biosynthesis; L-histidine biosynthesis; L-histidine from 5-phospho-alpha-D-ribose 1-diphosphate: step 1/9. Required for the first step of histidine biosynthesis. May allow the feedback regulation of ATP phosphoribosyltransferase activity by histidine. This chain is ATP phosphoribosyltransferase regulatory subunit, found in Pseudomonas aeruginosa (strain LESB58).